Here is a 304-residue protein sequence, read N- to C-terminus: Nucleotide-binding protein SH2124 (304 aa).

Residue 19–26 (GLSGAGKS) participates in ATP binding. Position 70 to 73 (70 to 73 (DLRG)) interacts with GTP.

The protein belongs to the RapZ-like family.

In terms of biological role, displays ATPase and GTPase activities. The chain is Nucleotide-binding protein SH2124 from Staphylococcus haemolyticus (strain JCSC1435).